A 381-amino-acid chain; its full sequence is Succinyl-diaminopimelate desuccinylase (381 aa).

Zn(2+) is bound at residue histidine 68. Aspartate 70 is an active-site residue. Aspartate 101 is a Zn(2+) binding site. Glutamate 135 functions as the Proton acceptor in the catalytic mechanism. The Zn(2+) site is built by glutamate 136, glutamate 164, and histidine 350.

Belongs to the peptidase M20A family. DapE subfamily. Homodimer. The cofactor is Zn(2+). Co(2+) serves as cofactor.

It carries out the reaction N-succinyl-(2S,6S)-2,6-diaminopimelate + H2O = (2S,6S)-2,6-diaminopimelate + succinate. It participates in amino-acid biosynthesis; L-lysine biosynthesis via DAP pathway; LL-2,6-diaminopimelate from (S)-tetrahydrodipicolinate (succinylase route): step 3/3. In terms of biological role, catalyzes the hydrolysis of N-succinyl-L,L-diaminopimelic acid (SDAP), forming succinate and LL-2,6-diaminopimelate (DAP), an intermediate involved in the bacterial biosynthesis of lysine and meso-diaminopimelic acid, an essential component of bacterial cell walls. The sequence is that of Succinyl-diaminopimelate desuccinylase from Neisseria meningitidis serogroup A / serotype 4A (strain DSM 15465 / Z2491).